Reading from the N-terminus, the 412-residue chain is Multifunctional CCA protein (412 aa).

ATP-binding residues include G8 and R11. The CTP site is built by G8 and R11. Positions 21 and 23 each coordinate Mg(2+). ATP contacts are provided by R91, R137, and R140. CTP contacts are provided by R91, R137, and R140. In terms of domain architecture, HD spans 228–329 (TGIHTMMVLA…LKVFDKADAW (102 aa)).

This sequence belongs to the tRNA nucleotidyltransferase/poly(A) polymerase family. Bacterial CCA-adding enzyme type 1 subfamily. Monomer. Can also form homodimers and oligomers. The cofactor is Mg(2+). Requires Ni(2+) as cofactor.

It carries out the reaction a tRNA precursor + 2 CTP + ATP = a tRNA with a 3' CCA end + 3 diphosphate. It catalyses the reaction a tRNA with a 3' CCA end + 2 CTP + ATP = a tRNA with a 3' CCACCA end + 3 diphosphate. Functionally, catalyzes the addition and repair of the essential 3'-terminal CCA sequence in tRNAs without using a nucleic acid template. Adds these three nucleotides in the order of C, C, and A to the tRNA nucleotide-73, using CTP and ATP as substrates and producing inorganic pyrophosphate. tRNA 3'-terminal CCA addition is required both for tRNA processing and repair. Also involved in tRNA surveillance by mediating tandem CCA addition to generate a CCACCA at the 3' terminus of unstable tRNAs. While stable tRNAs receive only 3'-terminal CCA, unstable tRNAs are marked with CCACCA and rapidly degraded. In Aeromonas hydrophila subsp. hydrophila (strain ATCC 7966 / DSM 30187 / BCRC 13018 / CCUG 14551 / JCM 1027 / KCTC 2358 / NCIMB 9240 / NCTC 8049), this protein is Multifunctional CCA protein.